The chain runs to 316 residues: MSDISKASLPKAIFLMGPTASGKTALAIELRKILPVELISVDSVLIYKGMDIGTAKPNAEELLAAPHRLLDIRDPSQAYSAADFRRDALAEMADITAAGRIPLLVGGTMLYFKALLEGLSPLPSADPEVRARIEQQAAEQGWESLHRQLQEVDPVAAARIHPNDPQRLSRALEVFFISGKTLTELTQTSGDALPYQVHQFAIAPASRELLHQRIEQRFHQMLASGFEAEVRALFARGDLHTDLPSIRCVGYRQMWSYLEGEISYDEMVYRGVCATRQLAKRQITWLRGWEGVHWLDSEKPEQARDEVLQVVGAIAG.

17-24 (GPTASGKT) is a binding site for ATP. A substrate-binding site is contributed by 19–24 (TASGKT). Interaction with substrate tRNA regions lie at residues 42 to 45 (DSVL), 166 to 170 (QRLSR), 247 to 252 (RCVGYR), and 280 to 287 (KRQITWLR).

This sequence belongs to the IPP transferase family. In terms of assembly, monomer. Mg(2+) is required as a cofactor.

It carries out the reaction adenosine(37) in tRNA + dimethylallyl diphosphate = N(6)-dimethylallyladenosine(37) in tRNA + diphosphate. Catalyzes the transfer of a dimethylallyl group onto the adenine at position 37 in tRNAs that read codons beginning with uridine, leading to the formation of N6-(dimethylallyl)adenosine (i(6)A). In Shigella flexneri, this protein is tRNA dimethylallyltransferase.